A 615-amino-acid polypeptide reads, in one-letter code: Coagulation factor XII (615 aa).

An N-terminal signal peptide occupies residues 1–19; that stretch reads MRALLLLGFLLVSLESTLS. The region spanning 42-90 is the Fibronectin type-II domain; sequence VTGEPCHFPFQYHRQLYHKCTHKGRPGPQPWCATTPNFDQDQRWGYCLE. 13 cysteine pairs are disulfide-bonded: cysteine 47/cysteine 73, cysteine 61/cysteine 88, cysteine 98/cysteine 110, cysteine 104/cysteine 119, cysteine 121/cysteine 130, cysteine 135/cysteine 163, cysteine 161/cysteine 170, cysteine 178/cysteine 189, cysteine 183/cysteine 198, cysteine 200/cysteine 209, cysteine 217/cysteine 295, cysteine 238/cysteine 277, and cysteine 266/cysteine 290. In terms of domain architecture, EGF-like 1 spans 94-131; that stretch reads VKDHCSKHSPCQKGGTCVNMPSGPHCLCPQHLTGNHCQ. O-linked (Fuc) threonine glycosylation is present at threonine 109. Residues 133–173 enclose the Fibronectin type-I domain; it reads EKCFEPQLLRFFHKNEIWYRTEQAAVARCQCKGPDAHCQRL. Residues 174 to 210 enclose the EGF-like 2 domain; that stretch reads ASQACRTNPCLHGGRCLEVEGHRLCHCPVGYTGAFCD. Residues 217 to 295 form the Kringle domain; that stretch reads CYDGRGLSYR…SWEYCDLAQC (79 aa). The N-linked (GlcNAc...) asparagine glycan is linked to asparagine 249. Residues 298–359 are disordered; that stretch reads PTQAAPPTPV…SLTRNGPLSC (62 aa). 2 O-linked (GalNAc...) threonine glycosylation sites follow: threonine 299 and threonine 305. An O-linked (GalNAc...) serine glycan is attached at serine 308. Over residues 317–326 the composition is skewed to pro residues; sequence PAQPAPPKPQ. A compositionally biased stretch (low complexity) spans 327–338; sequence PTTRTPPQSQTP. O-linked (GalNAc...) threonine glycosylation is found at threonine 328, threonine 329, and threonine 337. 7 disulfides stabilise this stretch: cysteine 359/cysteine 486, cysteine 397/cysteine 413, cysteine 405/cysteine 475, cysteine 436/cysteine 439, cysteine 500/cysteine 569, cysteine 532/cysteine 548, and cysteine 559/cysteine 590. Residues 373 to 614 enclose the Peptidase S1 domain; that stretch reads VVGGLVALRG…YLAWIREHTV (242 aa). Histidine 412 (charge relay system) is an active-site residue. N-linked (GlcNAc...) asparagine glycosylation is present at asparagine 433. Aspartate 461 (charge relay system) is an active-site residue. Serine 563 functions as the Charge relay system in the catalytic mechanism.

The protein belongs to the peptidase S1 family. Interacts with HRG; the interaction, which is enhanced in the presence of zinc ions and inhibited by heparin-binding, inhibits factor XII autoactivation and contact-initiated coagulation. Interacts (inactive and activated) with D7L2, an anticoagulant protein from Anopheles gambiae. Interacts (activated) with iripin-8, a serine protease inhibitor from Ixodes ricinus saliva. Interacts (inactive and activated) (via amino acids 1-77) with triafestin-1 and triafestin-2, anticoagulant proteins from Triatoma infestans. Interacts (inactive and activated) (via amino acids 1-77) with short form salivary protein D7R1, an anticoagulant protein from Anopheles stephensi. Interacts (inactive and activated) (via fibronectin type II domain) with haemaphysalin, an anticoagulant protein from Haemaphysalis longicornis. Post-translationally, factor XII is activated by kallikrein in alpha-factor XIIa, which is further converted by trypsin into beta-factor XIIa. Alpha-factor XIIa is composed of an NH2-terminal heavy chain, called coagulation factor XIIa heavy chain, and a COOH-terminal light chain, called coagulation factor XIIa light chain, connected by a disulfide bond. Beta-factor XIIa is composed of 2 chains linked by a disulfide bond, an N-terminal nonapeptide, called beta-factor XIIa part 1, and coagulation factor XIIa light chain, also known in this context as beta-factor XIIa part 2. In terms of processing, O- and N-glycosylated. The O-linked polysaccharides were not identified, but are probably the mucin type linked to GalNAc.

The protein localises to the secreted. It carries out the reaction Selective cleavage of Arg-|-Ile bonds in factor VII to form factor VIIa and factor XI to form factor XIa.. Its activity is regulated as follows. Activity is promoted in the presence of negatively charged surfaces. Its function is as follows. Factor XII is a serum glycoprotein that participates in the initiation of blood coagulation, fibrinolysis, and the generation of bradykinin and angiotensin. Prekallikrein is cleaved by factor XII to form kallikrein, which then cleaves factor XII first to alpha-factor XIIa and then trypsin cleaves it to beta-factor XIIa. Alpha-factor XIIa activates factor XI to factor XIa. This chain is Coagulation factor XII (F12), found in Homo sapiens (Human).